Reading from the N-terminus, the 525-residue chain is Probable feruloyl esterase B-1 (525 aa).

The N-terminal stretch at 1–20 is a signal peptide; it reads MMRWFLLIGLASAAATDSSA. 6 disulfides stabilise this stretch: cysteine 26–cysteine 75, cysteine 61–cysteine 114, cysteine 187–cysteine 442, cysteine 256–cysteine 273, cysteine 282–cysteine 292, and cysteine 502–cysteine 524. Residues asparagine 51, asparagine 80, and asparagine 98 are each glycosylated (N-linked (GlcNAc...) asparagine). Serine 188 acts as the Acyl-ester intermediate in catalysis. Ca(2+) is bound by residues aspartate 257, aspartate 260, alanine 262, and aspartate 264. N-linked (GlcNAc...) asparagine glycans are attached at residues asparagine 283, asparagine 288, and asparagine 351. Catalysis depends on charge relay system residues aspartate 401 and histidine 441.

This sequence belongs to the tannase family.

Its subcellular location is the secreted. It carries out the reaction feruloyl-polysaccharide + H2O = ferulate + polysaccharide.. In terms of biological role, involved in degradation of plant cell walls. Hydrolyzes the feruloyl-arabinose ester bond in arabinoxylans as well as the feruloyl-galactose and feruloyl-arabinose ester bonds in pectin. The chain is Probable feruloyl esterase B-1 (faeB-1) from Neosartorya fischeri (strain ATCC 1020 / DSM 3700 / CBS 544.65 / FGSC A1164 / JCM 1740 / NRRL 181 / WB 181) (Aspergillus fischerianus).